Here is a 269-residue protein sequence, read N- to C-terminus: MTAITSRELTLGYASQTIIDNLDIQLPKGKVSVLIGSNGCGKSTLLKSFARLLKPLKGAVILNGEDIHRQSTAAVARELAILPQMPDAPEGITVKQLVSLGRYPYQNWLQQWSEQDEAMVNQALRQTGTDMLAERPVDALSGGQRQRVWIAMTLAQDTEVVLLDEPTTFLDLAHQIEVLDLLRELNRQHGKTIIMVLHDLNLACRYADHMVAVHNRTAFAQGAPAEILDEALVKTVFNLDCRIVPDPFFHTPLCIPFGREKPQERATVA.

The ABC transporter domain occupies I4–D240. Residue G36 to S43 participates in ATP binding.

This sequence belongs to the ABC transporter superfamily.

It is found in the cell inner membrane. Its function is as follows. Part of the binding-protein-dependent transport system CbrABCD for uptake of the siderophore achromobactin. Probably responsible for energy coupling to the transport system. This is Achromobactin transport ATP-binding protein CbrD (cbrD) from Dickeya dadantii (strain 3937) (Erwinia chrysanthemi (strain 3937)).